Reading from the N-terminus, the 136-residue chain is Ig heavy chain V region XIG8 (136 aa).

Positions 1-18 (GFGIFVIFMFFSPSCILS) are cleaved as a signal peptide. The 110-residue stretch at 19–128 (QTLQESGPGT…TAGYFEHWGQ (110 aa)) folds into the Ig-like domain.

The polypeptide is Ig heavy chain V region XIG8 (Xenopus laevis (African clawed frog)).